A 120-amino-acid polypeptide reads, in one-letter code: Aspartate 1-decarboxylase (120 aa).

Ser-25 (schiff-base intermediate with substrate; via pyruvic acid) is an active-site residue. Ser-25 bears the Pyruvic acid (Ser) mark. Thr-57 provides a ligand contact to substrate. Tyr-58 functions as the Proton donor in the catalytic mechanism. 72-74 (GAA) contributes to the substrate binding site.

This sequence belongs to the PanD family. Heterooctamer of four alpha and four beta subunits. Requires pyruvate as cofactor. In terms of processing, is synthesized initially as an inactive proenzyme, which is activated by self-cleavage at a specific serine bond to produce a beta-subunit with a hydroxyl group at its C-terminus and an alpha-subunit with a pyruvoyl group at its N-terminus.

Its subcellular location is the cytoplasm. It carries out the reaction L-aspartate + H(+) = beta-alanine + CO2. Its pathway is cofactor biosynthesis; (R)-pantothenate biosynthesis; beta-alanine from L-aspartate: step 1/1. Functionally, catalyzes the pyruvoyl-dependent decarboxylation of aspartate to produce beta-alanine. The chain is Aspartate 1-decarboxylase from Helicobacter hepaticus (strain ATCC 51449 / 3B1).